Reading from the N-terminus, the 422-residue chain is Hexuronate transporter (422 aa).

The next 11 membrane-spanning stretches (helical) occupy residues Val-9 to Ile-29, Met-45 to Val-65, Val-82 to Ile-102, Thr-141 to Trp-161, Val-163 to Val-183, Leu-219 to Phe-239, Val-256 to Ser-276, Val-294 to Ala-314, Thr-321 to Ile-341, Phe-356 to Val-376, and Thr-381 to Ile-401.

Belongs to the major facilitator superfamily. Phthalate permease family.

The protein resides in the cell membrane. It carries out the reaction aldehydo-D-glucuronate(in) + H(+)(in) = aldehydo-D-glucuronate(out) + H(+)(out). The catalysed reaction is aldehydo-D-galacturonate(out) + H(+)(out) = aldehydo-D-galacturonate(in) + H(+)(in). Transport of aldohexuronates such as D-glucuronate and D-galacturonate. The protein is Hexuronate transporter of Bacillus subtilis (strain 168).